The chain runs to 677 residues: DNA ligase (677 aa).

NAD(+) contacts are provided by residues 34–38, 83–84, and Glu-115; these read DLAFD and SL. The active-site N6-AMP-lysine intermediate is Lys-117. NAD(+) contacts are provided by Arg-138, Glu-180, Lys-297, and Lys-321. 4 residues coordinate Zn(2+): Cys-416, Cys-419, Cys-434, and Cys-439. The 82-residue stretch at 596–677 folds into the BRCT domain; that stretch reads KKTSQLAGLT…LIKMLETEQA (82 aa).

It belongs to the NAD-dependent DNA ligase family. LigA subfamily. The cofactor is Mg(2+). Mn(2+) is required as a cofactor.

The enzyme catalyses NAD(+) + (deoxyribonucleotide)n-3'-hydroxyl + 5'-phospho-(deoxyribonucleotide)m = (deoxyribonucleotide)n+m + AMP + beta-nicotinamide D-nucleotide.. In terms of biological role, DNA ligase that catalyzes the formation of phosphodiester linkages between 5'-phosphoryl and 3'-hydroxyl groups in double-stranded DNA using NAD as a coenzyme and as the energy source for the reaction. It is essential for DNA replication and repair of damaged DNA. The polypeptide is DNA ligase (Acidobacterium capsulatum (strain ATCC 51196 / DSM 11244 / BCRC 80197 / JCM 7670 / NBRC 15755 / NCIMB 13165 / 161)).